A 367-amino-acid chain; its full sequence is Succinyl-diaminopimelate desuccinylase (367 aa).

His64 serves as a coordination point for Zn(2+). Asp66 is an active-site residue. Residue Asp95 participates in Zn(2+) binding. Glu125 acts as the Proton acceptor in catalysis. Residues Glu126, Glu154, and His339 each coordinate Zn(2+).

The protein belongs to the peptidase M20A family. DapE subfamily. Homodimer. The cofactor is Zn(2+). Co(2+) is required as a cofactor.

It carries out the reaction N-succinyl-(2S,6S)-2,6-diaminopimelate + H2O = (2S,6S)-2,6-diaminopimelate + succinate. It functions in the pathway amino-acid biosynthesis; L-lysine biosynthesis via DAP pathway; LL-2,6-diaminopimelate from (S)-tetrahydrodipicolinate (succinylase route): step 3/3. Functionally, catalyzes the hydrolysis of N-succinyl-L,L-diaminopimelic acid (SDAP), forming succinate and LL-2,6-diaminopimelate (DAP), an intermediate involved in the bacterial biosynthesis of lysine and meso-diaminopimelic acid, an essential component of bacterial cell walls. The chain is Succinyl-diaminopimelate desuccinylase from Sulfurovum sp. (strain NBC37-1).